Consider the following 171-residue polypeptide: Ponticulin-like protein F (171 aa).

The signal sequence occupies residues 1 to 20 (MKFIPALIIFVFTIFALTNS). The GPI-like-anchor amidated glycine moiety is linked to residue Gly149. Residues 150–171 (TSSTIVIPFALILSLLLSVITL) constitute a propeptide, removed in mature form.

Belongs to the ponticulin family. Post-translationally, the GPI-like-anchor contains a phosphoceramide group, rather than a phosphatidyl group.

It localises to the cell membrane. The polypeptide is Ponticulin-like protein F (ponF) (Dictyostelium discoideum (Social amoeba)).